Consider the following 557-residue polypeptide: 6-phosphofructo-2-kinase/fructose-2,6-bisphosphatase 2 (557 aa).

The span at 1–16 (MSENSTFSTEDSSSSS) shows a compositional bias: low complexity. The interval 1-21 (MSENSTFSTEDSSSSSYKPHA) is disordered. Ser2 is modified (N-acetylserine). The tract at residues 2 to 251 (SENSTFSTED…VYYLMNIHVH (250 aa)) is 6-phosphofructo-2-kinase. Phosphoserine; by PKA is present on Ser32. Residue 48–56 (GLPARGKTY) coordinates ATP. The beta-D-fructose 6-phosphate site is built by Arg81 and Arg105. Residue Asp131 is part of the active site. Beta-D-fructose 6-phosphate contacts are provided by Thr133 and Arg139. The active site involves Cys161. 170 to 175 (NILEVK) is an ATP binding site. Beta-D-fructose 6-phosphate contacts are provided by Lys175, Arg196, and Tyr200. Residues 252–557 (PRTIYLCRHG…PSMASLTLLS (306 aa)) are fructose-2,6-bisphosphatase. Beta-D-fructose 2,6-bisphosphate is bound at residue Arg259. The active-site Tele-phosphohistidine intermediate is the His260. Beta-D-fructose 2,6-bisphosphate is bound by residues Asn266 and Gly272. The active-site Proton donor/acceptor is Glu329. Residues Tyr340, Arg354, Lys358, Tyr369, Gln395, and Arg399 each contribute to the beta-D-fructose 2,6-bisphosphate site. 351-354 (FALR) provides a ligand contact to ATP. Residues 395-399 (QAVMR) and Tyr431 each bind ATP. Residues 449–495 (RDKPTHNFPKSQTPVRMRRNSFTPLSSSNTIRRPRNYSVGSRPLKPL) form a disordered region. The segment covering 456 to 479 (FPKSQTPVRMRRNSFTPLSSSNTI) has biased composition (polar residues). Ser469 carries the post-translational modification Phosphoserine. Phosphothreonine is present on Thr471. The residue at position 478 (Thr478) is a Phosphothreonine; by PKC. Phosphoserine is present on residues Ser486 and Ser496.

In the C-terminal section; belongs to the phosphoglycerate mutase family. In terms of assembly, homodimer. Forms a heterodimer with PFKFB3. In terms of processing, phosphorylation by AMPK stimulates activity.

The catalysed reaction is beta-D-fructose 2,6-bisphosphate + H2O = beta-D-fructose 6-phosphate + phosphate. The enzyme catalyses beta-D-fructose 6-phosphate + ATP = beta-D-fructose 2,6-bisphosphate + ADP + H(+). With respect to regulation, phosphorylation results in the activation of the kinase activity. In terms of biological role, synthesis and degradation of fructose 2,6-bisphosphate. The sequence is that of 6-phosphofructo-2-kinase/fructose-2,6-bisphosphatase 2 (Pfkfb2) from Rattus norvegicus (Rat).